A 218-amino-acid chain; its full sequence is Stromal cell-derived factor 2-like protein (218 aa).

Positions 1–21 are cleaved as a signal peptide; the sequence is MALGFFCLAIFLYLSLDPDSG. MIR domains lie at 34–88, 96–151, and 154–208; these read GVEI…VKPV, GDAV…LIIE, and GKTW…AAEG. The N-linked (GlcNAc...) asparagine glycan is linked to Asn214.

As to quaternary structure, interacts with ERDJ3B.

It localises to the endoplasmic reticulum. Its function is as follows. Involved in the endoplasmic reticulum (ER) protein quality control and unfolded protein response. May be involved in the quality control of glycoproteins. Forms a complex in the ER with ERDJ3B and MED37A/BIP1 which is required for the proper accumulation and function of the surface-exposed leucine-rich repeat receptor kinases EFR involved in pathogen-associated molecular pattern (PAMP) triggered immunity. The polypeptide is Stromal cell-derived factor 2-like protein (SDF2) (Arabidopsis thaliana (Mouse-ear cress)).